Reading from the N-terminus, the 694-residue chain is Frizzled-8 (694 aa).

The first 27 residues, 1–27, serve as a signal peptide directing secretion; it reads MEWGYLLEVTSLLAALALLQRSSGAAA. At 28–275 the chain is on the extracellular side; that stretch reads ASAKELACQE…NPFFSQDERA (248 aa). Positions 30–151 constitute an FZ domain; that stretch reads AKELACQEIT…GNPDTLCMDY (122 aa). Disulfide bonds link Cys-35-Cys-96, Cys-43-Cys-89, Cys-80-Cys-118, Cys-107-Cys-148, and Cys-111-Cys-135. Asn-49 carries an N-linked (GlcNAc...) asparagine glycan. 71-78 contributes to the hexadecanoate binding site; it reads QFWPLVEI. Positions 95 to 100 are wnt-binding; sequence ICLEDY. Residues 147-152 form a wnt-binding region; that stretch reads LCMDYN. N-linked (GlcNAc...) asparagine glycosylation occurs at Asn-152. The segment at 155–226 is disordered; sequence DLTTAAPSPP…KARPPGGGAA (72 aa). Over residues 161 to 175 the composition is skewed to pro residues; sequence PSPPRRLPPPPPGEQ. The span at 176–186 shows a compositional bias: low complexity; it reads PPSGSGHGRPP. A compositionally biased stretch (gly residues) spans 210–225; sequence RGGGGGGKARPPGGGA. A helical transmembrane segment spans residues 276–296; sequence FTVFWIGLWSVLCFVSTFATV. Over 297–312 the chain is Cytoplasmic; the sequence is STFLIDMERFKYPERP. The helical transmembrane segment at 313–333 threads the bilayer; sequence IIFLSACYLFVSVGYLVRLVA. The Extracellular portion of the chain corresponds to 334–396; sequence GHEKVACSGG…RYETTGPALC (63 aa). Residues 397 to 417 form a helical membrane-spanning segment; the sequence is TVVFLLVYFFGMASSIWWVIL. Topologically, residues 418–439 are cytoplasmic; the sequence is SLTWFLAAGMKWGNEAIAGYSQ. A helical membrane pass occupies residues 440–460; the sequence is YFHLAAWLVPSVKSIAVLALS. Residues 461–483 lie on the Extracellular side of the membrane; sequence SVDGDPVAGICYVGNQSLDNLRG. Asn-475 carries an N-linked (GlcNAc...) asparagine glycan. Residues 484–504 traverse the membrane as a helical segment; it reads FVLAPLVIYLFIGTMFLLAGF. Over 505 to 532 the chain is Cytoplasmic; it reads VSLFRIRSVIKQQDGPTKTHKLEKLMIR. Residues 533–553 traverse the membrane as a helical segment; sequence LGLFTVLYTVPAAVVVACLFY. Residues 554-584 lie on the Extracellular side of the membrane; it reads EQHNRPRWEATHNCPCLRDLQPDQARRPDYA. A helical transmembrane segment spans residues 585 to 605; that stretch reads VFMLKYFMCLVVGITSGVWVW. Topologically, residues 606–694 are cytoplasmic; it reads SGKTLESWRS…YPKQMPLSQV (89 aa). Residues 608–613 carry the Lys-Thr-X-X-X-Trp motif, mediates interaction with the PDZ domain of Dvl family members motif; the sequence is KTLESW. Gly residues predominate over residues 648 to 664; that stretch reads GGGGPGGGGGPGGGGGS. Residues 648 to 668 are disordered; it reads GGGGPGGGGGPGGGGGSLYSD. Residues 692–694 carry the PDZ-binding motif; the sequence is SQV.

It belongs to the G-protein coupled receptor Fz/Smo family. As to quaternary structure, component of a Wnt-signaling complex that contains a WNT protein, a FZD protein and LRP5 or LRP6. Interacts directly with LRP5 or LRP6; the interaction is promoted by Wnt-binding and signaling and inhibited by DKK1. Interacts with GPOC, RSPO1 and RSPO3. Interacts with glypican GPC3. In terms of processing, ubiquitinated by ZNRF3, leading to its degradation by the proteasome. Most abundant in fetal kidney, followed by brain and lung. In adult tissues, expressed in kidney, heart, pancreas and skeletal muscle.

The protein resides in the membrane. It is found in the golgi apparatus. It localises to the cell membrane. Receptor for Wnt proteins. Component of the Wnt-Fzd-LRP5-LRP6 complex that triggers beta-catenin signaling through inducing aggregation of receptor-ligand complexes into ribosome-sized signalosomes. The beta-catenin canonical signaling pathway leads to the activation of disheveled proteins, inhibition of GSK-3 kinase, nuclear accumulation of beta-catenin and activation of Wnt target genes. A second signaling pathway involving PKC and calcium fluxes has been seen for some family members, but it is not yet clear if it represents a distinct pathway or if it can be integrated in the canonical pathway, as PKC seems to be required for Wnt-mediated inactivation of GSK-3 kinase. Both pathways seem to involve interactions with G-proteins. May be involved in transduction and intercellular transmission of polarity information during tissue morphogenesis and/or in differentiated tissues. Coreceptor along with RYK of Wnt proteins, such as WNT1. The sequence is that of Frizzled-8 (FZD8) from Homo sapiens (Human).